Reading from the N-terminus, the 276-residue chain is MRIVSTVEELRSALPMDQTIGFVPTMGYLHEGHMSLVENARRENDVVVMSIFVNPTQFGPNEDLDRYPRDFERDEKLAREAGVDVLFYPTTETMYPLDMARVTVRHGADVLCGASRPGHFDGVLTIVSKLFNLVQPTRAYFGLKDAQQVALIEGYVRDYFVPVEIRRCPIIREETGLAKSSRNVYLSDIETVEASRIFSALTMAREALDAGQQVDEVKRQLIERLDEIPNSQIDYVELVDYPTLGAVSSDSTELLLAVAIQFERARLIDNVIWKKG.

M26–H33 serves as a coordination point for ATP. The active-site Proton donor is H33. Q57 is a (R)-pantoate binding site. Q57 contributes to the beta-alanine binding site. Residue G142–D145 coordinates ATP. Residue Q148 coordinates (R)-pantoate. Residues I171 and K179–R182 each bind ATP.

It belongs to the pantothenate synthetase family. As to quaternary structure, homodimer.

The protein resides in the cytoplasm. The catalysed reaction is (R)-pantoate + beta-alanine + ATP = (R)-pantothenate + AMP + diphosphate + H(+). It participates in cofactor biosynthesis; (R)-pantothenate biosynthesis; (R)-pantothenate from (R)-pantoate and beta-alanine: step 1/1. Its function is as follows. Catalyzes the condensation of pantoate with beta-alanine in an ATP-dependent reaction via a pantoyl-adenylate intermediate. This chain is Pantothenate synthetase, found in Exiguobacterium sp. (strain ATCC BAA-1283 / AT1b).